The sequence spans 897 residues: Major intrinsically disordered Notch2-binding receptor 1 (897 aa).

The Cytoplasmic portion of the chain corresponds to 1-872 (MDAMPEYSLF…AEFRRAKACK (872 aa)). Disordered regions lie at residues 405 to 433 (AKDK…SVAC), 450 to 502 (SINC…EDSE), and 688 to 766 (TRRS…PPKD). 2 stretches are compositionally biased toward polar residues: residues 411–423 (ASPS…SNGS) and 452–471 (NCPS…GTQT). Basic and acidic residues predominate over residues 472–498 (EQHESRKVKDYPSQNKFKERPPFKHSE). The span at 697-724 (EENSATESKVASITNSPRDWRTVSYSSH) shows a compositional bias: polar residues. Residues 725–756 (NGEEGKERDRHSEGKERHRKSREAERQYEAHQ) are compositionally biased toward basic and acidic residues. The helical transmembrane segment at 873-893 (IGALIFAAACTVILVIVVPIC) threads the bilayer. At 894–897 (TMKS) the chain is on the extracellular side.

Belongs to the MINAR family.

The protein resides in the cell membrane. Functionally, intrinsically disordered protein which may negatively regulate mTOR signaling pathway by stabilizing the mTOR complex component DEPTOR. Negatively regulates angiogenesis. Negatively regulates cell growth. May play a role in neuronal development. The protein is Major intrinsically disordered Notch2-binding receptor 1 (minar1) of Danio rerio (Zebrafish).